Here is a 558-residue protein sequence, read N- to C-terminus: Acylase ACY 1 proenzyme (558 aa).

Thr-368 (nucleophile) is an active-site residue.

This sequence belongs to the gamma-glutamyltransferase family. As to quaternary structure, dimer of two non-identical chains processed from the same precursor.

It catalyses the reaction (7R)-7-(4-carboxybutanamido)cephalosporanate + H2O = (7R)-7-aminocephalosporanate + glutarate. It carries out the reaction an N-terminal (5-L-glutamyl)-[peptide] + an alpha-amino acid = 5-L-glutamyl amino acid + an N-terminal L-alpha-aminoacyl-[peptide]. The catalysed reaction is glutathione + H2O = L-cysteinylglycine + L-glutamate. The enzyme catalyses an S-substituted glutathione + H2O = an S-substituted L-cysteinylglycine + L-glutamate. Besides the cephalosporin acylase I activity which converts GL-7ACA into 7-ACA; this enzyme displays some gamma glutamyltranspeptidase activity. This Pseudomonas sp. (strain V22) protein is Acylase ACY 1 proenzyme (acyI).